Here is a 133-residue protein sequence, read N- to C-terminus: ATP synthase epsilon chain (133 aa).

The protein belongs to the ATPase epsilon chain family. In terms of assembly, F-type ATPases have 2 components, CF(1) - the catalytic core - and CF(0) - the membrane proton channel. CF(1) has five subunits: alpha(3), beta(3), gamma(1), delta(1), epsilon(1). CF(0) has three main subunits: a, b and c.

It localises to the cell membrane. Functionally, produces ATP from ADP in the presence of a proton gradient across the membrane. This is ATP synthase epsilon chain from Bacillus cytotoxicus (strain DSM 22905 / CIP 110041 / 391-98 / NVH 391-98).